We begin with the raw amino-acid sequence, 270 residues long: Dermonecrotic toxin LhSicTox-alphaIA2aiii (270 aa).

H2 is a catalytic residue. Residues E22 and D24 each coordinate Mg(2+). Residue H38 is the Nucleophile of the active site. Cystine bridges form between C42-C48 and C44-C187. D82 lines the Mg(2+) pocket.

This sequence belongs to the arthropod phospholipase D family. Class II subfamily. The cofactor is Mg(2+). Expressed by the venom gland.

The protein localises to the secreted. The enzyme catalyses an N-(acyl)-sphingosylphosphocholine = an N-(acyl)-sphingosyl-1,3-cyclic phosphate + choline. The catalysed reaction is an N-(acyl)-sphingosylphosphoethanolamine = an N-(acyl)-sphingosyl-1,3-cyclic phosphate + ethanolamine. It catalyses the reaction a 1-acyl-sn-glycero-3-phosphocholine = a 1-acyl-sn-glycero-2,3-cyclic phosphate + choline. It carries out the reaction a 1-acyl-sn-glycero-3-phosphoethanolamine = a 1-acyl-sn-glycero-2,3-cyclic phosphate + ethanolamine. Its function is as follows. Dermonecrotic toxins cleave the phosphodiester linkage between the phosphate and headgroup of certain phospholipids (sphingolipid and lysolipid substrates), forming an alcohol (often choline) and a cyclic phosphate. This toxin acts on sphingomyelin (SM). It may also act on ceramide phosphoethanolamine (CPE), lysophosphatidylcholine (LPC) and lysophosphatidylethanolamine (LPE), but not on lysophosphatidylserine (LPS), and lysophosphatidylglycerol (LPG). It acts by transphosphatidylation, releasing exclusively cyclic phosphate products as second products. Induces dermonecrosis, hemolysis, increased vascular permeability, edema, inflammatory response, and platelet aggregation. The polypeptide is Dermonecrotic toxin LhSicTox-alphaIA2aiii (Loxosceles hirsuta (Recluse spider)).